A 651-amino-acid chain; its full sequence is Altered inheritance of mitochondria protein 21 (651 aa).

Positions 1-85 are disordered; the sequence is MPSEVTPKVP…LQRPVRRSTT (85 aa). The segment covering 9-19 has biased composition (basic and acidic residues); it reads VPERPSRRKTS. Thr-18 is subject to Phosphothreonine. Residue Ser-36 is modified to Phosphoserine. A Phosphothreonine modification is found at Thr-58. Residue Ser-70 is modified to Phosphoserine. The residue at position 85 (Thr-85) is a Phosphothreonine. Ser-104 carries the phosphoserine modification. Residues 110–119 show a composition bias toward basic residues; the sequence is NIHNVSRKKS. 2 disordered regions span residues 110-522 and 549-651; these read NIHN…EKIE and IDTT…FHSL. 2 stretches are compositionally biased toward polar residues: residues 133–149 and 164–178; these read QNGQ…TNPS and SAIS…SNNE. The segment covering 179-213 has biased composition (basic and acidic residues); it reads VTEHSDSEDLTEKQKVHAALDNEAGDRSHFEEKLI. Phosphoserine occurs at positions 183, 206, and 231. The segment covering 243-272 has biased composition (basic and acidic residues); that stretch reads SDDKAEKFTKHPESSLEELQKHQEQQEEKI. Position 277 is a phosphothreonine (Thr-277). Phosphoserine is present on Ser-284. Residues 296-323 are compositionally biased toward polar residues; it reads EVNSQPQGPSDTETVIAATSSNVPSQIA. Ser-324 is modified (phosphoserine). Composition is skewed to basic and acidic residues over residues 339–361 and 372–383; these read KKDF…RVSE and EESKIPKIPSER. Residues 383–396 form an interaction with SH3 domain of ABP1 region; sequence RPKRRAPPPVPKKP. Polar residues-rich tracts occupy residues 414–427 and 437–452; these read DLHN…TTAS and SSIT…TSKL. Basic and acidic residues predominate over residues 471 to 482; it reads LEKKLSSPDTES. Positions 501-512 are enriched in basic residues; that stretch reads RRGRGPRGRKLP. Residue Thr-552 is modified to Phosphothreonine. Residues 556 to 567 show a composition bias toward basic and acidic residues; the sequence is QAERALDEKEKL. Positions 575-586 are enriched in polar residues; sequence PLSQLPQTNTVG. Phosphoserine occurs at positions 592, 595, 597, 599, 639, 643, 647, and 650. Residues 594-605 show a composition bias toward polar residues; it reads ESLSPSEAITNR. Residues 639-651 are compositionally biased toward basic and acidic residues; that stretch reads SALHSEEASFHSL.

Belongs to the AIM21 family. Interacts with ribosomes. Interacts with ABP1.

The protein localises to the cytoplasm. Its subcellular location is the cytoskeleton. It is found in the actin patch. Involved in mitochondrial migration along actin filaments. The sequence is that of Altered inheritance of mitochondria protein 21 (AIM21) from Saccharomyces cerevisiae (strain RM11-1a) (Baker's yeast).